The primary structure comprises 119 residues: Flagellar transcriptional regulator FlhD (119 aa).

The protein belongs to the FlhD family. In terms of assembly, homodimer; disulfide-linked. Forms a heterohexamer composed of two FlhC and four FlhD subunits. Each FlhC binds a FlhD dimer, forming a heterotrimer, and a hexamer assembles by dimerization of two heterotrimers.

The protein localises to the cytoplasm. Functions in complex with FlhC as a master transcriptional regulator that regulates transcription of several flagellar and non-flagellar operons by binding to their promoter region. Activates expression of class 2 flagellar genes, including fliA, which is a flagellum-specific sigma factor that turns on the class 3 genes. Also regulates genes whose products function in a variety of physiological pathways. This chain is Flagellar transcriptional regulator FlhD, found in Pectobacterium atrosepticum (strain SCRI 1043 / ATCC BAA-672) (Erwinia carotovora subsp. atroseptica).